The primary structure comprises 463 residues: MVKNMDTIVQLAKHRGFVFPGSDIYGGLSNTWDYGPLGVELKNNIKKAWWQKFITQSPYNVGIDAAILMNPKTWEASGHLGNFNDPMIDNKDSKIRYRADKLIEDYMQNEKGDENFIADGLSFDEMKKIIDDEGIVCPVSKTANWTDIRQFNLMFKTFQGVTEDSTNELFLRPETAQGIFVNYKNVQRSMRKKLPFGIGQIGKSFRNEITPGNFIFRTREFEQMELEFFCKPGEEIEWQNYWKTFASEWLTDLNISEDNMRLRDHDEDELSHYSNATTDIEYKFPFGWGELWGIASRTDYDLRQHSEHSGEDFKYHDPETNEKYIPYCIEPSLGADRVTLAFLCDAYAEEGVEGSKDARTVMHFHPALAPYKAAVLPLSKKLSSEAIKIFEQLSSSFAIDFDESQSIGKRYRRQDEIGTPYCITFDFDSLEDNQVTVRDRDSMEQVRMPISELETFLAEKVKF.

Positions 98 and 174 each coordinate substrate. Residues 206–208, 216–221, 290–291, and 334–337 contribute to the ATP site; these read RNE, FRTREF, EL, and GADR. Residue 221–225 participates in substrate binding; that stretch reads FEQME. 330 to 334 provides a ligand contact to substrate; that stretch reads EPSLG.

The protein belongs to the class-II aminoacyl-tRNA synthetase family. Homodimer.

It is found in the cytoplasm. It carries out the reaction tRNA(Gly) + glycine + ATP = glycyl-tRNA(Gly) + AMP + diphosphate. In terms of biological role, catalyzes the attachment of glycine to tRNA(Gly). The protein is Glycine--tRNA ligase of Staphylococcus epidermidis (strain ATCC 35984 / DSM 28319 / BCRC 17069 / CCUG 31568 / BM 3577 / RP62A).